We begin with the raw amino-acid sequence, 1019 residues long: Protein HIRA (1019 aa).

WD repeat units follow at residues His-11–Asp-53, Asn-68–Thr-107, Ser-129–Ala-168, Gly-172–Ser-211, Gly-220–Asp-263, Gly-266–Val-322, and Leu-326–Ser-367. Residues Pro-23–Glu-443 are interaction with RBBP4. Low complexity-rich tracts occupy residues Gln-406–Gln-415 and Ala-544–Thr-561. Disordered regions lie at residues Gln-406–Val-433, Ala-513–Thr-561, and Leu-599–Pro-633. The tract at residues Asp-444–Leu-1019 is interaction with HDAC1. Residues Leu-599–Pro-625 are compositionally biased toward basic and acidic residues. Residues Arg-960–Leu-1019 form an interaction with HDAC2 region.

It belongs to the WD repeat HIR1 family. As to quaternary structure, interacts with ASF1, HDAC1, HDAC2 and RBBP4.

It is found in the nucleus. Cooperates with ASF1A to promote replication-independent chromatin assembly. May regulate the transcription of a variety of genes controlling cell growth. This is Protein HIRA (HIRA) from Gallus gallus (Chicken).